A 602-amino-acid chain; its full sequence is Type II restriction enzyme StsI (602 aa).

The enzyme catalyses Endonucleolytic cleavage of DNA to give specific double-stranded fragments with terminal 5'-phosphates.. In terms of biological role, an S subtype restriction enzyme that recognizes the double-stranded sequences 5'-GGATG-3' and 3'-CATCC-5' and cleaves respectively 15 bases after G-1 and 14 bases before C-1. The sequence is that of Type II restriction enzyme StsI (stsIR) from Streptococcus sanguinis.